The chain runs to 140 residues: Neuropeptide CCHamide-2 (140 aa).

The first 22 residues, 1–22 (MAQMYLAVTIIALLAISHGVSA), serve as a signal peptide directing secretion. Residues Cys26 and Cys33 are joined by a disulfide bond. Position 37 is a histidine amide (His37). A propeptide spanning residues 41-140 (SGDTSAMDQL…PDDGYYIESL (100 aa)) is cleaved from the precursor.

In terms of tissue distribution, expressed in corpora cardiaca (CC), corpora allata (CA), antennal lobe (AL) and gnathal ganglion (GNG) (at protein level). Expression detected in few animals (at protein level).

It localises to the secreted. Functionally, ligand for the CCHamide-2 receptor CCHa2-R. The polypeptide is Neuropeptide CCHamide-2 (Agrotis ipsilon (Black cutworm moth)).